Consider the following 706-residue polypeptide: Ribosomal RNA large subunit methyltransferase K/L (706 aa).

Residues 43 to 154 (LMYQSLLWSR…RDMASVALDL (112 aa)) enclose the THUMP domain.

Belongs to the methyltransferase superfamily. RlmKL family.

The protein localises to the cytoplasm. It catalyses the reaction guanosine(2445) in 23S rRNA + S-adenosyl-L-methionine = N(2)-methylguanosine(2445) in 23S rRNA + S-adenosyl-L-homocysteine + H(+). The enzyme catalyses guanosine(2069) in 23S rRNA + S-adenosyl-L-methionine = N(2)-methylguanosine(2069) in 23S rRNA + S-adenosyl-L-homocysteine + H(+). Specifically methylates the guanine in position 2445 (m2G2445) and the guanine in position 2069 (m7G2069) of 23S rRNA. This Yersinia pseudotuberculosis serotype IB (strain PB1/+) protein is Ribosomal RNA large subunit methyltransferase K/L.